The sequence spans 81 residues: Sulfur carrier protein TusA (81 aa).

Residue cysteine 19 is the Cysteine persulfide intermediate of the active site.

It belongs to the sulfur carrier protein TusA family.

It localises to the cytoplasm. Functionally, sulfur carrier protein which probably makes part of a sulfur-relay system. This chain is Sulfur carrier protein TusA, found in Shewanella sp. (strain MR-4).